Consider the following 986-residue polypeptide: Bifunctional glutamine synthetase adenylyltransferase/adenylyl-removing enzyme (986 aa).

The segment at 1–473 is adenylyl removase; it reads MTSSAPGNAD…HYARLFEGDP (473 aa). Positions 478–986 are adenylyl transferase; that stretch reads SLPPVNYGAG…RRVFTALLER (509 aa).

The protein belongs to the GlnE family. Requires Mg(2+) as cofactor.

The catalysed reaction is [glutamine synthetase]-O(4)-(5'-adenylyl)-L-tyrosine + phosphate = [glutamine synthetase]-L-tyrosine + ADP. The enzyme catalyses [glutamine synthetase]-L-tyrosine + ATP = [glutamine synthetase]-O(4)-(5'-adenylyl)-L-tyrosine + diphosphate. Its function is as follows. Involved in the regulation of glutamine synthetase GlnA, a key enzyme in the process to assimilate ammonia. When cellular nitrogen levels are high, the C-terminal adenylyl transferase (AT) inactivates GlnA by covalent transfer of an adenylyl group from ATP to specific tyrosine residue of GlnA, thus reducing its activity. Conversely, when nitrogen levels are low, the N-terminal adenylyl removase (AR) activates GlnA by removing the adenylyl group by phosphorolysis, increasing its activity. The regulatory region of GlnE binds the signal transduction protein PII (GlnB) which indicates the nitrogen status of the cell. The polypeptide is Bifunctional glutamine synthetase adenylyltransferase/adenylyl-removing enzyme (Bradyrhizobium sp. (strain ORS 278)).